A 595-amino-acid chain; its full sequence is MKFVKQKIQKLRKKLRHWEYLYYTKNESAVSDEKYDAMLEKLNQLEQIYPHLIAESSPTQRIGGVSQYNFKKIHHKVPMLSLNSIVASFQLLSFDKRIKIKLHANHVMSYCCELKIDGVAVSLLYKEGKLIYAATRGDGKIGEDVTENISTIRAVPMCLKIDSNKYGKLPYLLEIRGEVFISKLCFLELNKITIQQGNKPFSNARNAASGSLRQLDPSVTATRPLSFYCYGISNYCGEKELPDSHWERLQLCENWGLPINNYIRLISGVNKVLEYYSYIKTIRSNLEFNIDGIVIKVNSCAYQSKLGCGSRAPHWALAYKFPSEVSSAKVDNVIFQVGRTGIITPIAYLEPIVISDVTIRKVNMHNINEVKRLGLMIGDTVRIQRSGDVIPKIVEVILSERTDHVKTIELPRFCPVCGSRIKTWRNQSILRCTAGLSCLAQRKATLEHFVSKKAMNIYGMGNKIIDQLVNQGLIFTSSDVFRLNKNKLLCLEGFGLENIERLLRSIEDSKKITLARFIYALGIYGVGETVASNLAIVYKTIENLAAADLQSLSNLKYVGPIIANNIYHFFRNPDNLKNVQDLIDPAIGIQLYVIT.

Residues 32–36 (DEKYD), 81–82 (SL), and Glu-113 each bind NAD(+). Lys-115 acts as the N6-AMP-lysine intermediate in catalysis. NAD(+) is bound by residues Arg-136, Glu-178, Lys-296, and Lys-320. Zn(2+) contacts are provided by Cys-414, Cys-417, Cys-432, and Cys-438.

This sequence belongs to the NAD-dependent DNA ligase family. LigA subfamily. It depends on Mg(2+) as a cofactor. The cofactor is Mn(2+).

It catalyses the reaction NAD(+) + (deoxyribonucleotide)n-3'-hydroxyl + 5'-phospho-(deoxyribonucleotide)m = (deoxyribonucleotide)n+m + AMP + beta-nicotinamide D-nucleotide.. Functionally, DNA ligase that catalyzes the formation of phosphodiester linkages between 5'-phosphoryl and 3'-hydroxyl groups in double-stranded DNA using NAD as a coenzyme and as the energy source for the reaction. It is essential for DNA replication and repair of damaged DNA. In Blochmanniella pennsylvanica (strain BPEN), this protein is DNA ligase.